A 199-amino-acid chain; its full sequence is Zinc finger matrin-type protein 2 (199 aa).

An N-acetylalanine modification is found at Ala2. Glycyl lysine isopeptide (Lys-Gly) (interchain with G-Cter in SUMO2) cross-links involve residues Lys8, Lys36, Lys39, Lys45, Lys55, Lys61, Lys64, Lys70, Lys102, and Lys123. The interval 27–46 (KRLTEEREKKDGKPVQPVKR) is disordered. The Matrin-type zinc-finger motif lies at 80 to 104 (YYCNVCDCVVKDSINFLDHINGKKH). Basic and acidic residues predominate over residues 150 to 173 (REEEEKAKAYKKEKQKEKKRRAEE). The tract at residues 150–175 (REEEEKAKAYKKEKQKEKKRRAEEDL) is disordered.

Component of the spliceosome B complex.

Its subcellular location is the nucleus. In terms of biological role, involved in pre-mRNA splicing as a component of the spliceosome. This is Zinc finger matrin-type protein 2 (ZMAT2) from Homo sapiens (Human).